The primary structure comprises 69 residues: Conotoxin Eb6.9 (69 aa).

An N-terminal signal peptide occupies residues 1–17 (VLIIAVLFLTACQLTTA). A propeptide spanning residues 18–41 (ETYSRGRQKHRARRSTDKNSKWTR) is cleaved from the precursor. 3 cysteine pairs are disulfide-bonded: Cys43/Cys57, Cys50/Cys61, and Cys56/Cys68.

It belongs to the conotoxin O1 superfamily. Expressed by the venom duct.

It is found in the secreted. The sequence is that of Conotoxin Eb6.9 (E1) from Conus ebraeus (Hebrew cone).